Here is a 493-residue protein sequence, read N- to C-terminus: Acetylcholine receptor subunit beta (493 aa).

Residues 1–24 form the signal peptide; sequence MENVRRMALGLVVMMALALSGVGA. At 25 to 240 the chain is on the extracellular side; that stretch reads SVMEDTLLSV…VTFYLIIQRK (216 aa). Cysteine 152 and cysteine 166 are oxidised to a cystine. The N-linked (GlcNAc...) asparagine glycan is linked to asparagine 165. 3 helical membrane passes run 241–265, 273–291, and 307–328; these read PLFYIVYTIIPCILISILAILVFYL, MSLSISALLAVTVFLLLLA, and YLMFIMILVAFSVILSVVVLNL. Over 329–461 the chain is Cytoplasmic; it reads HHRSPNTHTM…WQYVAMVADR (133 aa). Tyrosine 379 is subject to Phosphotyrosine; by Tyr-kinases. The helical transmembrane segment at 462–480 threads the bilayer; that stretch reads LFLYVFFVICSIGTFSIFL.

The protein belongs to the ligand-gated ion channel (TC 1.A.9) family. Acetylcholine receptor (TC 1.A.9.1) subfamily. Beta-1/CHRNB1 sub-subfamily. As to quaternary structure, pentamer of two alpha chains, and one each of the beta, delta, and gamma chains.

It localises to the postsynaptic cell membrane. The protein resides in the cell membrane. The enzyme catalyses K(+)(in) = K(+)(out). The catalysed reaction is Na(+)(in) = Na(+)(out). In terms of biological role, after binding acetylcholine, the AChR responds by an extensive change in conformation that affects all subunits and leads to opening of an ion-conducting channel across the plasma membrane. The protein is Acetylcholine receptor subunit beta (CHRNB1) of Tetronarce californica (Pacific electric ray).